A 146-amino-acid polypeptide reads, in one-letter code: Putative pre-16S rRNA nuclease (146 aa).

This sequence belongs to the YqgF nuclease family.

It is found in the cytoplasm. In terms of biological role, could be a nuclease involved in processing of the 5'-end of pre-16S rRNA. This is Putative pre-16S rRNA nuclease from Methylobacillus flagellatus (strain ATCC 51484 / DSM 6875 / VKM B-1610 / KT).